Here is a 515-residue protein sequence, read N- to C-terminus: Maturase K (515 aa).

The protein belongs to the intron maturase 2 family. MatK subfamily.

It localises to the plastid. The protein localises to the chloroplast. Functionally, usually encoded in the trnK tRNA gene intron. Probably assists in splicing its own and other chloroplast group II introns. The polypeptide is Maturase K (Pinus coulteri (Coulter pine)).